The following is a 181-amino-acid chain: Inner membrane-spanning protein YciB (181 aa).

5 helical membrane passes run 19 to 39, 50 to 70, 80 to 100, 118 to 138, and 148 to 168; these read FFDIYAATGALIVATLIQLIA, MHLITFALVASFGTATLIFHD, IVYALFAIALIAGQFLGKPIL, LTWYWVLFFVACGLINIYVAF, and FKVFGLTAATLVNTLLTVVYL.

Belongs to the YciB family.

The protein resides in the cell inner membrane. In terms of biological role, plays a role in cell envelope biogenesis, maintenance of cell envelope integrity and membrane homeostasis. This chain is Inner membrane-spanning protein YciB, found in Shewanella amazonensis (strain ATCC BAA-1098 / SB2B).